The primary structure comprises 268 residues: Undecaprenyl-diphosphatase (268 aa).

Helical transmembrane passes span 1 to 21, 39 to 59, 85 to 105, 110 to 130, 144 to 164, 187 to 207, 221 to 241, and 247 to 267; these read MSLIYLVVLALVQGITEFLPI, QGPLIDVMAHAGSLLAVLVYF, ALLVAASMPPIIIVAGALVAF, ALRSPRVIAIATLAFALPLWL, MSFKHAALIGIAQLFALIPGA, FSMLMAIPVIAAFGLVSLIEL, DGLIVAGLSFVTAWAAIAVLM, and IGFLPFALYRVGLGLALLVFF.

It belongs to the UppP family.

Its subcellular location is the cell inner membrane. It catalyses the reaction di-trans,octa-cis-undecaprenyl diphosphate + H2O = di-trans,octa-cis-undecaprenyl phosphate + phosphate + H(+). Functionally, catalyzes the dephosphorylation of undecaprenyl diphosphate (UPP). Confers resistance to bacitracin. The protein is Undecaprenyl-diphosphatase of Maricaulis maris (strain MCS10) (Caulobacter maris).